Consider the following 287-residue polypeptide: uncharacterized protein (287 aa).

This is an uncharacterized protein from Archaeoglobus fulgidus (strain ATCC 49558 / DSM 4304 / JCM 9628 / NBRC 100126 / VC-16).